The primary structure comprises 130 residues: Small ribosomal subunit protein uS9 (130 aa).

The protein belongs to the universal ribosomal protein uS9 family.

This chain is Small ribosomal subunit protein uS9, found in Desulfovibrio desulfuricans (strain ATCC 27774 / DSM 6949 / MB).